Here is a 119-residue protein sequence, read N- to C-terminus: Large ribosomal subunit protein uL24 (119 aa).

This sequence belongs to the universal ribosomal protein uL24 family. In terms of assembly, part of the 50S ribosomal subunit.

Functionally, one of two assembly initiator proteins, it binds directly to the 5'-end of the 23S rRNA, where it nucleates assembly of the 50S subunit. Its function is as follows. One of the proteins that surrounds the polypeptide exit tunnel on the outside of the subunit. This chain is Large ribosomal subunit protein uL24, found in Clavibacter sepedonicus (Clavibacter michiganensis subsp. sepedonicus).